The chain runs to 425 residues: Ribosome biogenesis protein WDR12 homolog (425 aa).

The ubiquitin-like (UBL) domain stretch occupies residues 7–93 (IQAKFFTKDE…ETIVHLEYLE (87 aa)). 7 WD repeats span residues 105-142 (IHDD…RRLT), 145-187 (GHLG…NAVE), 194-233 (GHAR…TDTD), 265-303 (GHHE…MKSQ), 305-344 (AGSK…GTIV), 350-390 (SHAG…APLY), and 394-425 (GHED…FEHK). The segment at 227-253 (PDSTDTDHGQDGSEEGSRKKQKTVDGK) is disordered. Positions 231–253 (DTDHGQDGSEEGSRKKQKTVDGK) are enriched in basic and acidic residues.

Belongs to the WD repeat WDR12/YTM1 family.

The protein localises to the nucleus. It localises to the nucleolus. The protein resides in the nucleoplasm. Functionally, required for maturation of ribosomal RNAs and formation of the large ribosomal subunit. This Ixodes scapularis (Black-legged tick) protein is Ribosome biogenesis protein WDR12 homolog.